A 210-amino-acid chain; its full sequence is Uracil phosphoribosyltransferase (210 aa).

5-phospho-alpha-D-ribose 1-diphosphate-binding positions include R77, R102, and 129–137; that span reads DPMLATGAS. Uracil contacts are provided by residues I195 and 200–202; that span reads GDA. 5-phospho-alpha-D-ribose 1-diphosphate is bound at residue D201.

The protein belongs to the UPRTase family. The cofactor is Mg(2+).

It catalyses the reaction UMP + diphosphate = 5-phospho-alpha-D-ribose 1-diphosphate + uracil. Its pathway is pyrimidine metabolism; UMP biosynthesis via salvage pathway; UMP from uracil: step 1/1. Allosterically activated by GTP. Functionally, catalyzes the conversion of uracil and 5-phospho-alpha-D-ribose 1-diphosphate (PRPP) to UMP and diphosphate. This is Uracil phosphoribosyltransferase from Mycoplasmoides gallisepticum (strain R(low / passage 15 / clone 2)) (Mycoplasma gallisepticum).